The sequence spans 103 residues: MQPNDITFSQRFQDDILAGRKTITIRDESESHFKTGDVLRVGRFEDDGYFCTIEVTATSTVTLDTLTEKHAEQENMTLTELIKVIADIYPGQTQFYVIEFKCL.

One can recognise an ASCH domain in the interval 6 to 101; it reads ITFSQRFQDD…QTQFYVIEFK (96 aa). The active-site Proton acceptor is the Lys21. The active-site Nucleophile is Thr24. Glu74 functions as the Proton donor in the catalytic mechanism.

This sequence belongs to the N(4)-acetylcytidine amidohydrolase family.

The catalysed reaction is N(4)-acetylcytidine + H2O = cytidine + acetate + H(+). It carries out the reaction N(4)-acetyl-2'-deoxycytidine + H2O = 2'-deoxycytidine + acetate + H(+). It catalyses the reaction N(4)-acetylcytosine + H2O = cytosine + acetate + H(+). Its function is as follows. Catalyzes the hydrolysis of N(4)-acetylcytidine (ac4C). The sequence is that of N(4)-acetylcytidine amidohydrolase (yqfB) from Shigella boydii serotype 4 (strain Sb227).